The chain runs to 108 residues: Large ribosomal subunit protein eL32 (108 aa).

Over residues 21-30 (RRPRGRTSKM) the composition is skewed to basic residues. The tract at residues 21-44 (RRPRGRTSKMRRYEKGKPAMPAIG) is disordered.

Belongs to the eukaryotic ribosomal protein eL32 family.

The protein is Large ribosomal subunit protein eL32 (rpl32e) of Methanothermobacter thermautotrophicus (strain ATCC 29096 / DSM 1053 / JCM 10044 / NBRC 100330 / Delta H) (Methanobacterium thermoautotrophicum).